The sequence spans 574 residues: 2-succinyl-5-enolpyruvyl-6-hydroxy-3-cyclohexene-1-carboxylate synthase (574 aa).

It belongs to the TPP enzyme family. MenD subfamily. Homodimer. Mg(2+) serves as cofactor. Requires Mn(2+) as cofactor. It depends on thiamine diphosphate as a cofactor.

It catalyses the reaction isochorismate + 2-oxoglutarate + H(+) = 5-enolpyruvoyl-6-hydroxy-2-succinyl-cyclohex-3-ene-1-carboxylate + CO2. The protein operates within quinol/quinone metabolism; 1,4-dihydroxy-2-naphthoate biosynthesis; 1,4-dihydroxy-2-naphthoate from chorismate: step 2/7. Its pathway is quinol/quinone metabolism; menaquinone biosynthesis. Catalyzes the thiamine diphosphate-dependent decarboxylation of 2-oxoglutarate and the subsequent addition of the resulting succinic semialdehyde-thiamine pyrophosphate anion to isochorismate to yield 2-succinyl-5-enolpyruvyl-6-hydroxy-3-cyclohexene-1-carboxylate (SEPHCHC). This is 2-succinyl-5-enolpyruvyl-6-hydroxy-3-cyclohexene-1-carboxylate synthase from Vibrio atlanticus (strain LGP32) (Vibrio splendidus (strain Mel32)).